The following is a 371-amino-acid chain: Proton-coupled zinc antiporter SLC30A2 (371 aa).

Residues 1–69 lie on the Cytoplasmic side of the membrane; that stretch reads MQTMDKQNLL…DPEKQRARRK (69 aa). Positions 47–50 match the Mitochondrial localization signal motif; the sequence is HYCH. A Zn(2+)-binding site is contributed by C49. A helical transmembrane segment spans residues 70–90; the sequence is LYVASAICLVFMIGEIIGGYL. The Lumenal portion of the chain corresponds to 91-99; that stretch reads AQSLAIMTD. The chain crosses the membrane as a helical span at residues 100–120; it reads AAHLLTDFASMLISLFALWVS. 2 residues coordinate Zn(2+): H102 and D106. The Cytoplasmic segment spans residues 121 to 136; it reads SRPATKTMNFGWHRAE. The helical transmembrane segment at 137–157 threads the bilayer; it reads ILGALLSVLSIWVVTGVLVYL. Residues 158–172 are Lumenal-facing; that stretch reads AVQRLISGDYEIKGD. A helical transmembrane segment spans residues 173 to 193; sequence TMLITSGCAVAVNLIMGLALH. Topologically, residues 194–219 are cytoplasmic; it reads QSGHGHSHGNSRDDSSQQQNPSVRAA. A helical transmembrane segment spans residues 220–240; sequence FIHVIGDLLQSVGVLVAAYII. Residues H222 and D226 each contribute to the Zn(2+) site. The Lumenal portion of the chain corresponds to 241–248; the sequence is YFKPEYKY. The helical transmembrane segment at 249-269 threads the bilayer; it reads VDPICTFLFSILVLGTTLTIL. Over 270-303 the chain is Cytoplasmic; sequence RDVILVLMEGTPKGVDFTTVKNLLLSVDGVEALH. The Lysosomal targeting motif motif lies at 293–294; it reads LL. At S295 the chain carries Phosphoserine. Zn(2+) contacts are provided by H303, H320, and E354. Residues 304-324 form a helical membrane-spanning segment; it reads SLHIWALTVAQPVLSVHIAIA. Topologically, residues 325-371 are lumenal; the sequence is QNADAQAVLKVARDRLQGKFNFHTMTIQIEKYSEDMKNCQACQGPLE.

The protein belongs to the cation diffusion facilitator (CDF) transporter (TC 2.A.4) family. SLC30A subfamily. In terms of assembly, homodimer. Interacts (via lysosomal targeting motif) with AP3D1; in AP-3-mediated transport to lysosomes. Interacts with TMEM163. Post-translationally, phosphorylated at Ser-295. Phosphorylation at Ser-295 prevents localization to lysosomes. Dephosphorylation of Ser-295 which triggers localization to lysosomes, accumulation of zinc into lysosomes and lysosomal-mediated cell death is induced by TNF-alpha.

It is found in the cytoplasmic vesicle. It localises to the secretory vesicle membrane. Its subcellular location is the zymogen granule membrane. The protein localises to the endosome membrane. The protein resides in the lysosome membrane. It is found in the mitochondrion inner membrane. It localises to the cell membrane. It carries out the reaction Zn(2+)(in) + 2 H(+)(out) = Zn(2+)(out) + 2 H(+)(in). In terms of biological role, electroneutral proton-coupled antiporter concentrating zinc ions into a variety of intracellular organelles including endosomes, zymogen granules and mitochondria. Thereby, plays a crucial role in cellular zinc homeostasis to confer upon cells protection against its potential cytotoxicity. Regulates the zinc concentration of milk, through the transport of zinc ions into secretory vesicles of mammary cells. By concentrating zinc ions into lysosomes participates to lysosomal-mediated cell death during early mammary gland involution. Electroneutral proton-coupled antiporter mediating the efflux of zinc ions through the plasma membrane. The sequence is that of Proton-coupled zinc antiporter SLC30A2 from Mus musculus (Mouse).